The primary structure comprises 181 residues: ATP-dependent protease subunit HslV (181 aa).

Residue threonine 9 is part of the active site. Positions 166, 169, and 172 each coordinate Na(+).

The protein belongs to the peptidase T1B family. HslV subfamily. In terms of assembly, a double ring-shaped homohexamer of HslV is capped on each side by a ring-shaped HslU homohexamer. The assembly of the HslU/HslV complex is dependent on binding of ATP.

It is found in the cytoplasm. It carries out the reaction ATP-dependent cleavage of peptide bonds with broad specificity.. With respect to regulation, allosterically activated by HslU binding. Its function is as follows. Protease subunit of a proteasome-like degradation complex believed to be a general protein degrading machinery. This chain is ATP-dependent protease subunit HslV, found in Staphylococcus aureus (strain bovine RF122 / ET3-1).